The sequence spans 483 residues: Glutamyl-tRNA(Gln) amidotransferase subunit A (483 aa).

Residues Lys-76 and Ser-151 each act as charge relay system in the active site. Residue Ser-175 is the Acyl-ester intermediate of the active site.

The protein belongs to the amidase family. GatA subfamily. In terms of assembly, heterotrimer of A, B and C subunits.

The enzyme catalyses L-glutamyl-tRNA(Gln) + L-glutamine + ATP + H2O = L-glutaminyl-tRNA(Gln) + L-glutamate + ADP + phosphate + H(+). Allows the formation of correctly charged Gln-tRNA(Gln) through the transamidation of misacylated Glu-tRNA(Gln) in organisms which lack glutaminyl-tRNA synthetase. The reaction takes place in the presence of glutamine and ATP through an activated gamma-phospho-Glu-tRNA(Gln). The protein is Glutamyl-tRNA(Gln) amidotransferase subunit A of Coxiella burnetii (strain CbuK_Q154) (Coxiella burnetii (strain Q154)).